The following is a 167-amino-acid chain: Transcription factor 24 (167 aa).

Over residues 1-23 the composition is skewed to low complexity; it reads MDRGRPAGSPLSASAEPAPLAAA. A disordered region spans residues 1–60; it reads MDRGRPAGSPLSASAEPAPLAAAIRDSRPGRTGPGPAGPGGGSRSGSGRPAAANAARERS. Residues 32–45 show a composition bias toward gly residues; it reads TGPGPAGPGGGSRS. Residues 46–55 show a composition bias toward low complexity; that stretch reads GSGRPAAANA. The bHLH domain maps to 49–101; it reads RPAAANAARERSRVQTLRHAFLELQRTLPSVPPDTKLSKLDVLLLATTYIAHL.

As to quaternary structure, efficient DNA binding requires dimerization with another bHLH protein.

The protein localises to the nucleus. Putative transcription factor. The polypeptide is Transcription factor 24 (TCF24) (Homo sapiens (Human)).